The following is a 53-amino-acid chain: Sec-independent protein translocase protein TatA (53 aa).

The chain crosses the membrane as a helical span at residues 1 to 21; sequence MGMSFSHLLIVLLIIFVLFGA.

Belongs to the TatA/E family. The Tat system comprises two distinct complexes: a TatABC complex, containing multiple copies of TatA, TatB and TatC subunits, and a separate TatA complex, containing only TatA subunits. Substrates initially bind to the TatABC complex, which probably triggers association of the separate TatA complex to form the active translocon.

The protein localises to the cell inner membrane. Part of the twin-arginine translocation (Tat) system that transports large folded proteins containing a characteristic twin-arginine motif in their signal peptide across membranes. TatA could form the protein-conducting channel of the Tat system. This Rickettsia typhi (strain ATCC VR-144 / Wilmington) protein is Sec-independent protein translocase protein TatA.